The following is a 407-amino-acid chain: Arginine deiminase (407 aa).

Residue Cys-397 is the Amidino-cysteine intermediate of the active site.

It belongs to the arginine deiminase family.

It localises to the cytoplasm. It carries out the reaction L-arginine + H2O = L-citrulline + NH4(+). It functions in the pathway amino-acid degradation; L-arginine degradation via ADI pathway; carbamoyl phosphate from L-arginine: step 1/2. This chain is Arginine deiminase, found in Salmonella arizonae (strain ATCC BAA-731 / CDC346-86 / RSK2980).